The sequence spans 694 residues: Nuclear factor erythroid 2-related factor 3 (694 aa).

Residues 133–150 (ASSTGGAGASVDGGSQAV) show a composition bias toward low complexity. Disordered stretches follow at residues 133–256 (ASST…LNGT) and 330–357 (DPTA…QTLP). 2 stretches are compositionally biased toward basic and acidic residues: residues 193–217 (GVLR…RVSA) and 231–254 (NKIA…RHLN). A compositionally biased stretch (polar residues) spans 333–357 (ARTSQSQEPFLQLNSHTTNPEQTLP). Residues 578–641 (LIRDIRRRGK…NIMKQKLHDL (64 aa)) form the bZIP domain. The tract at residues 580–599 (RDIRRRGKNKVAAQNCRKRK) is basic motif. The leucine-zipper stretch occupies residues 606 to 620 (LEDDVCNLQAKKETL).

Belongs to the bZIP family. CNC subfamily. Heterodimer with MAFG, MAFK and other small MAF proteins that binds to the MAF recognition elements (MARE). As to expression, highly expressed in human placenta and also in B-cell and monocyte cell lines. Low expression in heart, brain, lung, skeletal muscle, kidney and pancreas.

It is found in the nucleus. In terms of biological role, activates erythroid-specific, globin gene expression. The protein is Nuclear factor erythroid 2-related factor 3 (NFE2L3) of Homo sapiens (Human).